Here is a 372-residue protein sequence, read N- to C-terminus: Septin-1 (372 aa).

One can recognise a Septin-type G domain in the interval K27–S301. A G1 motif region spans residues G37 to S44. GTP-binding positions include G37–S44, T71, G97, and K176–E184. Residues D94–G97 are G3 motif. Residues G175 to D178 are G4 motif. S211 is subject to Phosphoserine. G234 and R250 together coordinate GTP. S253 bears the Phosphoserine; by AURKB mark. T256 carries the post-translational modification Phosphothreonine. S312 and S320 each carry phosphoserine; by AURKB. The tract at residues L352–L372 is disordered. Low complexity predominate over residues M355–L372.

The protein belongs to the TRAFAC class TrmE-Era-EngA-EngB-Septin-like GTPase superfamily. Septin GTPase family. As to quaternary structure, septins polymerize into heterooligomeric protein complexes that form filaments, and can associate with cellular membranes, actin filaments and microtubules. GTPase activity is required for filament formation. Interacts with AURKB. In terms of tissue distribution, expressed at high levels in lymphoid and hematopoietic tissues.

Its subcellular location is the cytoplasm. It localises to the cytoskeleton. The protein localises to the microtubule organizing center. The protein resides in the centrosome. It is found in the midbody. Its function is as follows. Filament-forming cytoskeletal GTPase. May play a role in cytokinesis (Potential). The protein is Septin-1 of Homo sapiens (Human).